A 510-amino-acid polypeptide reads, in one-letter code: MEFSTKALDLSKAGQNGFLATKTDCLVVGLFEGQSLAGVAKALDVATKGLVARLVKQGDFEGKRGTQLMLHEVAGVGAARVLLVGLGKEADFNDKAFAEAVRTATRALGGTRAASALWCLVQQPPQQRDVAWAIITTITLVREAGYRLLERHPELKRAPRGAGANEKASLRKIVLAVDVGDAKAASQAAVRGTAIANGMELTRDLGNLPSNICTPTYLANTARGIAKRHKLKVEILGRKQIEALNMGAFLAVTKGSVEPPQFIVLRYDGASAKQAPVVLVGKGITFDTGGISLKPGEGMDEMKYDMCGAASVLGTIQAVAEMGLKQNVIAVVPTCENMPSGIATKPGDVVTSMSGQTIEILNTDAEGRLILCDALTYVERFKPAAVIDVATLTGACIIALGHVNSGLYARSDALADQLLGAGRKAMDTAWRLPLDDDYQDQLKSNFADMANIGGRPAGSVTAACFLARYTEKYDWAHLDIAGTAWKSGAAKGATGRPVPLLTQFLMDRAA.

The Mn(2+) site is built by Lys-282 and Asp-287. The active site involves Lys-294. Mn(2+) contacts are provided by Asp-305, Asp-364, and Glu-366. Residue Arg-368 is part of the active site.

The protein belongs to the peptidase M17 family. It depends on Mn(2+) as a cofactor.

It is found in the cytoplasm. It catalyses the reaction Release of an N-terminal amino acid, Xaa-|-Yaa-, in which Xaa is preferably Leu, but may be other amino acids including Pro although not Arg or Lys, and Yaa may be Pro. Amino acid amides and methyl esters are also readily hydrolyzed, but rates on arylamides are exceedingly low.. The enzyme catalyses Release of an N-terminal amino acid, preferentially leucine, but not glutamic or aspartic acids.. Its function is as follows. Presumably involved in the processing and regular turnover of intracellular proteins. Catalyzes the removal of unsubstituted N-terminal amino acids from various peptides. The protein is Probable cytosol aminopeptidase of Cupriavidus metallidurans (strain ATCC 43123 / DSM 2839 / NBRC 102507 / CH34) (Ralstonia metallidurans).